The following is an 864-amino-acid chain: Alpha-glucosidase (864 aa).

The signal sequence occupies residues 1–22; the sequence is MAKVSFIFVAIALITGNVLCQT. N-linked (GlcNAc...) asparagine glycans are attached at residues asparagine 187, asparagine 364, and asparagine 406. The active-site Nucleophile is aspartate 430. Glutamate 433 is an active-site residue. Asparagine 466 and asparagine 500 each carry an N-linked (GlcNAc...) asparagine glycan. Aspartate 567 serves as the catalytic Proton donor. N-linked (GlcNAc...) asparagine glycosylation is found at asparagine 568 and asparagine 734.

The protein belongs to the glycosyl hydrolase 31 family.

The catalysed reaction is Hydrolysis of terminal, non-reducing (1-&gt;4)-linked alpha-D-glucose residues with release of alpha-D-glucose.. Functionally, hydrolyzes not only malto-oligosaccharides but also soluble starch. The chain is Alpha-glucosidase from Mucor javanicus.